Consider the following 373-residue polypeptide: Response regulator aspartate phosphatase J (373 aa).

2 TPR repeats span residues 99 to 135 (YYFY…VEDE) and 146 to 179 (AEVY…GRRR). Positions 147, 150, 181, 192, 217, 225, 228, 260, 297, 300, and 335 each coordinate L-glutamyl-L-arginyl-glycyl-L-methionyl-L-threonine. TPR repeat units follow at residues 220 to 253 (AAAY…FEEH) and 259 to 292 (VQAV…AAEW). The TPR 5 repeat unit spans residues 334–367 (EDLLHDTAERFNQLEHYESAAFFYRRLMNIKKKL).

It belongs to the Rap family. Monomer in solution. Homodimer.

Its subcellular location is the cytoplasm. With respect to regulation, inhibited in vitro by the competence and sporulation stimulating factor (CSF), encoded by phrC. However, CSF has at least three targets (RapB, RapC, and RapJ) and the physiological importance of RapJ inhibition by CSF is unknown. Interaction with CSF induces a conformational change in RapJ. In terms of biological role, involved in the regulation of sporulation. Acts as a phosphatase that specifically dephosphorylates the sporulation initiation phosphotransferase Spo0F and inhibits its activity. This is Response regulator aspartate phosphatase J (rapJ) from Bacillus subtilis (strain 168).